A 451-amino-acid chain; its full sequence is Bifunctional protein GlmU (451 aa).

Positions 1–217 (MKTLILAAGL…IDEVTGVNDR (217 aa)) are pyrophosphorylase. Residues 6–9 (LAAG), K20, Q68, 73–74 (GT), 95–97 (YGD), G134, E146, N161, and N215 each bind UDP-N-acetyl-alpha-D-glucosamine. D97 is a binding site for Mg(2+). N215 contacts Mg(2+). A linker region spans residues 218–238 (IQLSKLEKNMRKRINEKLMRE). Residues 239-451 (GVRIIDPESV…GGNQNADSKE (213 aa)) are N-acetyltransferase. Positions 320 and 338 each coordinate UDP-N-acetyl-alpha-D-glucosamine. H350 functions as the Proton acceptor in the catalytic mechanism. Residues Y353 and N364 each contribute to the UDP-N-acetyl-alpha-D-glucosamine site. Residues A367, 373–374 (NY), S392, A410, and R427 each bind acetyl-CoA.

It in the N-terminal section; belongs to the N-acetylglucosamine-1-phosphate uridyltransferase family. In the C-terminal section; belongs to the transferase hexapeptide repeat family. In terms of assembly, homotrimer. Mg(2+) is required as a cofactor.

The protein localises to the cytoplasm. The catalysed reaction is alpha-D-glucosamine 1-phosphate + acetyl-CoA = N-acetyl-alpha-D-glucosamine 1-phosphate + CoA + H(+). The enzyme catalyses N-acetyl-alpha-D-glucosamine 1-phosphate + UTP + H(+) = UDP-N-acetyl-alpha-D-glucosamine + diphosphate. It functions in the pathway nucleotide-sugar biosynthesis; UDP-N-acetyl-alpha-D-glucosamine biosynthesis; N-acetyl-alpha-D-glucosamine 1-phosphate from alpha-D-glucosamine 6-phosphate (route II): step 2/2. Its pathway is nucleotide-sugar biosynthesis; UDP-N-acetyl-alpha-D-glucosamine biosynthesis; UDP-N-acetyl-alpha-D-glucosamine from N-acetyl-alpha-D-glucosamine 1-phosphate: step 1/1. The protein operates within bacterial outer membrane biogenesis; LPS lipid A biosynthesis. In terms of biological role, catalyzes the last two sequential reactions in the de novo biosynthetic pathway for UDP-N-acetylglucosamine (UDP-GlcNAc). The C-terminal domain catalyzes the transfer of acetyl group from acetyl coenzyme A to glucosamine-1-phosphate (GlcN-1-P) to produce N-acetylglucosamine-1-phosphate (GlcNAc-1-P), which is converted into UDP-GlcNAc by the transfer of uridine 5-monophosphate (from uridine 5-triphosphate), a reaction catalyzed by the N-terminal domain. The polypeptide is Bifunctional protein GlmU (Thermosipho africanus (strain TCF52B)).